The chain runs to 422 residues: Serine protease HTRA2, mitochondrial (422 aa).

A mitochondrion-targeting transit peptide spans 1–17; that stretch reads MALRGSHRLEVIFKRCI. Residues 18–74 constitute a propeptide that is removed on maturation; the sequence is ASPVFHSHAANRRSSQLAIKGTDPSSNGNSGQDQQNGEQKAKGWRRLVRFFVPFSLG. The segment covering 29 to 55 has biased composition (polar residues); that stretch reads RRSSQLAIKGTDPSSNGNSGQDQQNGE. A disordered region spans residues 29–56; sequence RRSSQLAIKGTDPSSNGNSGQDQQNGEQ. The helical transmembrane segment at 64-82 threads the bilayer; the sequence is LVRFFVPFSLGAAVSAAVI. Short sequence motifs (IAP-binding) lie at residues 75–78 and 94–97; these read AAVS and SKMT. Residues 139–302 form a serine protease region; that stretch reads SNGSGFIIEQ…IPIDYVKVFL (164 aa). Residues His-157, Asp-189, and Ser-266 each act as charge relay system in the active site. A PDZ domain is found at 325-410; it reads MGITMLTLTP…NLDIVILRGV (86 aa).

It belongs to the peptidase S1C family. In terms of assembly, interacts with th/DIAP1 (via BIR 2 domain).

It is found in the mitochondrion intermembrane space. It localises to the mitochondrion membrane. The catalysed reaction is Cleavage of non-polar aliphatic amino-acids at the P1 position, with a preference for Val, Ile and Met. At the P2 and P3 positions, Arg is selected most strongly with a secondary preference for other hydrophilic residues.. Functionally, serine protease that shows proteolytic activity against a non-specific substrate beta-casein. Promotes or induces cell death either by direct binding to and inhibition of BIRC proteins (also called inhibitor of apoptosis proteins, IAPs), leading to an increase in caspase activity, or by a BIRC inhibition-independent, caspase-independent and serine protease activity-dependent mechanism. Can antagonize antiapoptotic activity of th/Diap1 by directly inducing the degradation of th/Diap1. This chain is Serine protease HTRA2, mitochondrial, found in Drosophila yakuba (Fruit fly).